Here is a 289-residue protein sequence, read N- to C-terminus: ATP phosphoribosyltransferase (289 aa).

The protein belongs to the ATP phosphoribosyltransferase family. Long subfamily. Mg(2+) serves as cofactor.

The protein localises to the cytoplasm. The catalysed reaction is 1-(5-phospho-beta-D-ribosyl)-ATP + diphosphate = 5-phospho-alpha-D-ribose 1-diphosphate + ATP. It functions in the pathway amino-acid biosynthesis; L-histidine biosynthesis; L-histidine from 5-phospho-alpha-D-ribose 1-diphosphate: step 1/9. Feedback inhibited by histidine. Catalyzes the condensation of ATP and 5-phosphoribose 1-diphosphate to form N'-(5'-phosphoribosyl)-ATP (PR-ATP). Has a crucial role in the pathway because the rate of histidine biosynthesis seems to be controlled primarily by regulation of HisG enzymatic activity. The polypeptide is ATP phosphoribosyltransferase (Koribacter versatilis (strain Ellin345)).